A 129-amino-acid polypeptide reads, in one-letter code: UPF0225 protein XC_4246 (129 aa).

It belongs to the UPF0225 family.

This Xanthomonas campestris pv. campestris (strain 8004) protein is UPF0225 protein XC_4246.